A 560-amino-acid chain; its full sequence is Clathrin interactor EPSIN 1 (560 aa).

The region spanning 20-152 (LKVLKVPEME…NNKEKISEIR (133 aa)) is the ENTH domain. The interval 190–288 (NFDSYKDRDS…KPSTGSANQV (99 aa)) is disordered. Residues 193–220 (SYKDRDSREDKNDYESFQKSRRGVKTEE) show a composition bias toward basic and acidic residues. Residues 221-233 (QSYTSKKSFSRYG) are compositionally biased toward polar residues. The span at 234–251 (STDHDNLSSGKKSPDSAK) shows a compositional bias: basic and acidic residues. Over residues 274–287 (GTSSNKPSTGSANQ) the composition is skewed to polar residues. Positions 296-300 (IGDFL) match the Clathrin binding motif. An ALPHA-ADR binding motif is present at residues 320-322 (DLF). Positions 414–439 (SHSASVSTGPQAPSVHGSATNTTSPL) are enriched in polar residues. Disordered regions lie at residues 414 to 453 (SHSA…QKKD) and 517 to 560 (LGKT…GFKQ). Residues 526 to 536 (QQQQQQQQQQQ) are compositionally biased toward low complexity. The span at 544–554 (FFSSLSNQRYQ) shows a compositional bias: polar residues.

The protein belongs to the epsin family. In terms of assembly, interacts with clathrin, VTI11, GAMMA-ADR and VSR1. Binds to the deubiquitinating enzyme AMSH3. In terms of tissue distribution, mostly expressed in cotyledons and flowers, and, to a lower extent, in roots, leaves and siliques (at protein level).

The protein localises to the golgi apparatus. The protein resides in the prevacuolar compartment. It is found in the cytoplasm. Its subcellular location is the cytoplasmic vesicle. It localises to the clathrin-coated vesicle. The protein localises to the cytoskeleton. May have a role in transport via clathrin-coated vesicles from the trans-Golgi network to endosomes. Stimulates clathrin assembly. Does not seem to bind to phospholipids. Plays an important role in the vacuolar trafficking of soluble cargo proteins at the trans-Golgi network. In Arabidopsis thaliana (Mouse-ear cress), this protein is Clathrin interactor EPSIN 1 (EPSIN1).